The sequence spans 310 residues: MAESNADVYASFGVNNAVMTGSTPTEHEQNMLSLDVAARDGDDAIVLSDEPTSHNDDPYAAGVDPFADGEDDEGRIQVRISEDGNEAGFDTDGDNSEVETEGEDVEFEPLGDTPEELSQVTEQLGQHEEGFQAMVEQAVERGLSADSVSRIYEEYEADGISEKSYAELEAAGYSRAFVDSYISGQEALVDQYVNQVVAFAGGQERFSAIHTHLEATNPAAAESLESAMMNRDLATVKAIINLAGESYTKKFGKPANRSVTKRATPVKPVARQKEGFTNQAEMIKAMSDPRYRSDSAYRQMVEQKVIDSSF.

A disordered region spans residues 46–102 (VLSDEPTSHNDDPYAAGVDPFADGEDDEGRIQVRISEDGNEAGFDTDGDNSEVETEG). The segment covering 83-102 (DGNEAGFDTDGDNSEVETEG) has biased composition (acidic residues).

It belongs to the T7likevirus capsid assembly scaffolding protein family.

Its function is as follows. Scaffolding protein involved in the icosahedric procapsid assembly. Coassembles with the capsid proteins to form the procapsid, in which the scaffolding protein is found within the external shell of icosahedrally arranged capsid protein subunits. In a subsequent step the scaffolding protein molecules are released from the procapsid. Facilitates assembly by binding to gp10 hexamers but not the pentamers and locking them into a morphogenically correct conformation. This Enterobacteria phage T3 (Bacteriophage T3) protein is Capsid assembly scaffolding protein (9).